A 408-amino-acid chain; its full sequence is CCA-adding enzyme (408 aa).

ATP-binding residues include Gly8 and Arg11. CTP is bound by residues Gly8 and Arg11. Mg(2+)-binding residues include Glu21 and Asp23. ATP is bound by residues Arg91, Arg137, and Arg140. Positions 91, 137, and 140 each coordinate CTP. The region spanning 226–329 is the HD domain; sequence TGYYTMTTLS…MTLFHVFDCW (104 aa).

The protein belongs to the tRNA nucleotidyltransferase/poly(A) polymerase family. Bacterial CCA-adding enzyme type 2 subfamily. Mg(2+) is required as a cofactor.

The enzyme catalyses a tRNA precursor + 2 CTP + ATP = a tRNA with a 3' CCA end + 3 diphosphate. It catalyses the reaction a tRNA with a 3' CCA end + 2 CTP + ATP = a tRNA with a 3' CCACCA end + 3 diphosphate. Catalyzes the addition and repair of the essential 3'-terminal CCA sequence in tRNAs without using a nucleic acid template. Adds these three nucleotides in the order of C, C, and A to the tRNA nucleotide-73, using CTP and ATP as substrates and producing inorganic pyrophosphate. tRNA 3'-terminal CCA addition is required both for tRNA processing and repair. Also involved in tRNA surveillance by mediating tandem CCA addition to generate a CCACCA at the 3' terminus of unstable tRNAs. While stable tRNAs receive only 3'-terminal CCA, unstable tRNAs are marked with CCACCA and rapidly degraded. The chain is CCA-adding enzyme from Blochmanniella pennsylvanica (strain BPEN).